The chain runs to 61 residues: Metallothionein-1A (61 aa).

Met1 bears the N-acetylmethionine mark. The beta stretch occupies residues 1–29 (MDPNCSCATGGSCTCTGSCKCKECKCTSC). A divalent metal cation-binding residues include Cys5, Cys7, Cys13, Cys15, Cys19, Cys21, Cys24, Cys26, Cys29, Cys33, Cys34, Cys36, Cys37, Cys41, Cys44, Cys48, Cys50, and Cys57. An alpha region spans residues 30-61 (KKSCCSCCPMSCAKCAQGCICKGASEKCSCCA). Ser58 carries the post-translational modification Phosphoserine. Cys59 and Cys60 together coordinate a divalent metal cation.

It belongs to the metallothionein superfamily. Type 1 family. In terms of assembly, monomer.

Its function is as follows. Metallothioneins have a high content of cysteine residues that bind various heavy metals; these proteins are transcriptionally regulated by both heavy metals and glucocorticoids. This Homo sapiens (Human) protein is Metallothionein-1A (MT1A).